A 331-amino-acid polypeptide reads, in one-letter code: Laforin (331 aa).

The CBM20 domain occupies 1-124; that stretch reads MRFRFGVVVP…NNLVDGVYCL (124 aa). At serine 25 the chain carries Phosphoserine; by AMPK. Residues tryptophan 32, lysine 87, 103 to 107, aspartate 197, aspartate 235, and arginine 241 each bind substrate; that span reads GPHHD. One can recognise a Tyrosine-protein phosphatase domain in the interval 156 to 323; the sequence is HYSRILPNIW…QEDFFQKFGK (168 aa). The active-site Phosphocysteine intermediate is cysteine 266. A Glucan phosphatase signature motif CXAGXGR motif is present at residues 266 to 272; it reads CNAGVGR. Substrate contacts are provided by residues 267–272 and tyrosine 304; that span reads NAGVGR.

This sequence belongs to the protein-tyrosine phosphatase family. As to quaternary structure, homodimer. Interacts with itself. Interacts with PPP1R3B, PPP1R3C, PPP1R3D, HIRIP5, and EPM2AIP1. Binds glycogen and Lafora bodies. Interacts with NHLRC1/malin (via the NHL repeats). Forms a complex with NHLRC1/malin and HSP70. Interacts with PPP1R3D; in the presence of NHLC1/malin the interaction leads to ubiquitination and autophagic degradation of PPP1R3D. Interacts (via the phosphatase domain) with MAPT/Tau; the interaction dephosphorylates MAPT. Isoform 1 and isoform 2 interact to form a heterodimeric complex that lacks phosphatase activity (in vitro). Active phosphatase isoform 7 and isoform 1 interact with each other, but give rise to lower phosphatase activity than isoform 1 or isoform 7 by themselves (in vitro). Active phosphatase isoform 7 and inactive isoform 2 interact with each other, but give rise to lower phosphatase activity than isoform 7 by itself (in vitro). Interacts with PRDM8. In terms of processing, polyubiquitinated by NHLRC1/malin. Phosphorylation on Ser-25 by AMPK affects the phosphatase activity of the enzyme and its ability to homodimerize and interact with NHLRC1, PPP1R3C or PRKAA2. In terms of tissue distribution, expressed in heart, skeletal muscle, kidney, pancreas and brain. Isoform 4 is also expressed in the placenta.

The protein localises to the cytoplasm. The protein resides in the endoplasmic reticulum membrane. Its subcellular location is the cell membrane. It is found in the nucleus. It catalyses the reaction O-phospho-L-tyrosyl-[protein] + H2O = L-tyrosyl-[protein] + phosphate. It carries out the reaction O-phospho-L-seryl-[protein] + H2O = L-seryl-[protein] + phosphate. The enzyme catalyses O-phospho-L-threonyl-[protein] + H2O = L-threonyl-[protein] + phosphate. In terms of biological role, plays an important role in preventing glycogen hyperphosphorylation and the formation of insoluble aggregates, via its activity as glycogen phosphatase, and by promoting the ubiquitination of proteins involved in glycogen metabolism via its interaction with the E3 ubiquitin ligase NHLRC1/malin. Shows strong phosphatase activity towards complex carbohydrates in vitro, avoiding glycogen hyperphosphorylation which is associated with reduced branching and formation of insoluble aggregates. Dephosphorylates phosphotyrosine and synthetic substrates, such as para-nitrophenylphosphate (pNPP), and has low activity with phosphoserine and phosphothreonine substrates (in vitro). Has been shown to dephosphorylate MAPT. Forms a complex with NHLRC1/malin and HSP70, which suppresses the cellular toxicity of misfolded proteins by promoting their degradation through the ubiquitin-proteasome system (UPS). Acts as a scaffold protein to facilitate PPP1R3C/PTG ubiquitination by NHLRC1/malin. Also promotes proteasome-independent protein degradation through the macroautophagy pathway. Does not bind to glycogen. Lacks phosphatase activity and might function as a dominant-negative regulator for the phosphatase activity of isoform 1 and isoform 7. Its function is as follows. Has phosphatase activity (in vitro). This Homo sapiens (Human) protein is Laforin (EPM2A).